We begin with the raw amino-acid sequence, 542 residues long: CTP synthase (542 aa).

Residues 1-265 (MARYVFITGG…DDEVLAAFGI (265 aa)) form an amidoligase domain region. Serine 13 provides a ligand contact to CTP. Serine 13 lines the UTP pocket. ATP-binding positions include 14–19 (SLGKGI) and aspartate 71. The Mg(2+) site is built by aspartate 71 and glutamate 139. Residues 146–148 (DIE), 186–191 (KTKPTQ), and lysine 222 contribute to the CTP site. UTP contacts are provided by residues 186–191 (KTKPTQ) and lysine 222. Residues 291–541 (TIAIVGKYTG…IEAATEQSRL (251 aa)) form the Glutamine amidotransferase type-1 domain. Position 353 (glycine 353) interacts with L-glutamine. Cysteine 380 acts as the Nucleophile; for glutamine hydrolysis in catalysis. L-glutamine contacts are provided by residues 381 to 384 (FGMQ), glutamate 404, and arginine 469. Catalysis depends on residues histidine 514 and glutamate 516.

Belongs to the CTP synthase family. As to quaternary structure, homotetramer.

The catalysed reaction is UTP + L-glutamine + ATP + H2O = CTP + L-glutamate + ADP + phosphate + 2 H(+). It carries out the reaction L-glutamine + H2O = L-glutamate + NH4(+). It catalyses the reaction UTP + NH4(+) + ATP = CTP + ADP + phosphate + 2 H(+). It functions in the pathway pyrimidine metabolism; CTP biosynthesis via de novo pathway; CTP from UDP: step 2/2. Its activity is regulated as follows. Allosterically activated by GTP, when glutamine is the substrate; GTP has no effect on the reaction when ammonia is the substrate. The allosteric effector GTP functions by stabilizing the protein conformation that binds the tetrahedral intermediate(s) formed during glutamine hydrolysis. Inhibited by the product CTP, via allosteric rather than competitive inhibition. Its function is as follows. Catalyzes the ATP-dependent amination of UTP to CTP with either L-glutamine or ammonia as the source of nitrogen. Regulates intracellular CTP levels through interactions with the four ribonucleotide triphosphates. The polypeptide is CTP synthase (Rhizobium etli (strain ATCC 51251 / DSM 11541 / JCM 21823 / NBRC 15573 / CFN 42)).